The sequence spans 551 residues: MKTDIEIAREAKLKRISDIAKDIGIEEKYLEPYGKYIAKVDLKFLKTLNNKKDGKLILVTAITPTPAGEGKTTTSIGLSMALNRLGKKSIVTLREPSLGPVFGIKGGAAGGGYSQVLPMENINLHFTGDIHAISSAHNLISAVIDSHIKFGNNLNINPTKVFWKRTMDMNDRALRQIIVGLGGNANGLPREDGFIITAASEIMAILCLAKDLKDLKERLGNIVVAESFDKKLVRVKDLKIEGALTALLKDAINPNIVQTIENTPAFIHGGPFANIAHGTNSIIATKLALKLTDYVVTEAGFAADLGAEKFLDFVTQVGNFDVNAVVLVATIKALKYHGGIKKDELNKENVDAMLKGMENLKTHIENLKLYNVPVVVALNVFASDTTNELKAFSEHCNAPHALVRAFEKGSKGTIELANTVLENISDSKHIPILNPEMSIEEKIETLATKVYRARKVIYTDTAKSKLKFLKRHGFETLPVIVAKTQSSISDDPKKLNAPRDYNFTIRDFELSAGAGFVVALAGEIMRMPGLSKIPNAVNIDVDEDGNIVGLS.

65–72 contacts ATP; the sequence is TPAGEGKT.

Belongs to the formate--tetrahydrofolate ligase family.

It catalyses the reaction (6S)-5,6,7,8-tetrahydrofolate + formate + ATP = (6R)-10-formyltetrahydrofolate + ADP + phosphate. Its pathway is one-carbon metabolism; tetrahydrofolate interconversion. The protein is Formate--tetrahydrofolate ligase of Thermosipho melanesiensis (strain DSM 12029 / CIP 104789 / BI429).